The chain runs to 345 residues: MGPSWLLWTVAVAVLLLTRAASMEASSFCGHLEYWNSDKRCCSRCLQRFGPPACPDHEFTENCGLNDFGDTVAHPFKKCSPGYCNPNGTELCSQCSSGAAAAPAHVESPGRTHKQCRKKPVPPKDVCPLKPEDAGASSSPGRWSLGQTTKNEVSSRPGFVSASVLPLAVLPLLLVLLLILAVVLLSLFKRKVRSRPGSSSAFGDPSTSLHYWPCPGTLEVLESRNRGKANLLQLSSWELQGLASQPLSLLLDELEVLEELIMLLDPEPGPSGSTAYGTTRHLAARYGLPATWSTFAYSLRPSRSPLRALIEMVVAREPSATLGQFGTYLAQLGRTDALQVLSKLG.

The first 20 residues, 1–20 (MGPSWLLWTVAVAVLLLTRA), serve as a signal peptide directing secretion. The Extracellular portion of the chain corresponds to 21-163 (ASMEASSFCG…SSRPGFVSAS (143 aa)). A glycan (N-linked (GlcNAc...) asparagine) is linked at N87. Residues 106–149 (VESPGRTHKQCRKKPVPPKDVCPLKPEDAGASSSPGRWSLGQTT) form a disordered region. The span at 111 to 121 (RTHKQCRKKPV) shows a compositional bias: basic residues. Positions 136 to 149 (ASSSPGRWSLGQTT) are enriched in polar residues. A helical membrane pass occupies residues 164–184 (VLPLAVLPLLLVLLLILAVVL). Over 185–345 (LSLFKRKVRS…DALQVLSKLG (161 aa)) the chain is Cytoplasmic.

Ubiquitously expressed with higher expression in lymph node. Highly expressed in T-cells and monocytes.

It localises to the cell membrane. Functionally, probable cell membrane receptor for the IGF-like family protein IGFL. This Mus musculus (Mouse) protein is IGF-like family receptor 1 (Igflr1).